A 78-amino-acid chain; its full sequence is Large ribosomal subunit protein bL28 (78 aa).

It belongs to the bacterial ribosomal protein bL28 family.

In Azoarcus sp. (strain BH72), this protein is Large ribosomal subunit protein bL28.